Reading from the N-terminus, the 708-residue chain is Probable GTP diphosphokinase RSH3, chloroplastic (708 aa).

2 disordered regions span residues 1 to 50 (MSLP…AAGG) and 109 to 134 (HSPV…SWLA). The N-terminal 58 residues, 1–58 (MSLPAISLYTSPPPGAVYSSEFDPSSRGSSPPCSTAPPSTSHRPPAAAGGLSCLFSSP), are a transit peptide targeting the chloroplast. Low complexity-rich tracts occupy residues 29 to 41 (SSPP…PSTS) and 118 to 131 (PSSS…PPAS). An HD domain is found at 233-337 (YLQHCVETAV…IKLADRVHNM (105 aa)).

It belongs to the RelA/SpoT family.

The protein localises to the plastid. It localises to the chloroplast. The enzyme catalyses GTP + ATP = guanosine 3'-diphosphate 5'-triphosphate + AMP. Probable ppGpp (guanosine 3'-diphosphate 5'-diphosphate) synthetase that may be involved in a rapid plant ppGpp-mediated response to pathogens and other stresses. This chain is Probable GTP diphosphokinase RSH3, chloroplastic (RSH3), found in Oryza sativa subsp. japonica (Rice).